The sequence spans 141 residues: Ribosome-binding factor A (141 aa).

It belongs to the RbfA family. In terms of assembly, monomer. Binds 30S ribosomal subunits, but not 50S ribosomal subunits or 70S ribosomes.

It localises to the cytoplasm. In terms of biological role, one of several proteins that assist in the late maturation steps of the functional core of the 30S ribosomal subunit. Associates with free 30S ribosomal subunits (but not with 30S subunits that are part of 70S ribosomes or polysomes). Required for efficient processing of 16S rRNA. May interact with the 5'-terminal helix region of 16S rRNA. The chain is Ribosome-binding factor A from Afipia carboxidovorans (strain ATCC 49405 / DSM 1227 / KCTC 32145 / OM5) (Oligotropha carboxidovorans).